A 284-amino-acid chain; its full sequence is RNase adapter protein RapZ (284 aa).

8–15 (GRSGSGKS) provides a ligand contact to ATP. 56–59 (DVRN) contacts GTP. The tract at residues 266–284 (RSRGKNVQSRHRTLEKRKP) is RNA-binding.

It belongs to the RapZ-like family. RapZ subfamily. In terms of assembly, homotrimer.

Functionally, modulates the synthesis of GlmS, by affecting the processing and stability of the regulatory small RNA GlmZ. When glucosamine-6-phosphate (GlcN6P) concentrations are high in the cell, RapZ binds GlmZ and targets it to cleavage by RNase E. Consequently, GlmZ is inactivated and unable to activate GlmS synthesis. Under low GlcN6P concentrations, RapZ is sequestered and inactivated by an other regulatory small RNA, GlmY, preventing GlmZ degradation and leading to synthesis of GlmS. The polypeptide is RNase adapter protein RapZ (Shigella boydii serotype 18 (strain CDC 3083-94 / BS512)).